We begin with the raw amino-acid sequence, 145 residues long: Cell wall synthesis protein CwsA (145 aa).

The helical transmembrane segment at tryptophan 104–valine 124 threads the bilayer.

This sequence belongs to the CwsA family. In terms of assembly, interacts with CrgA and Wag31.

The protein resides in the cell membrane. In terms of biological role, required for regulated cell division, cell wall synthesis and the maintenance of cell shape. The sequence is that of Cell wall synthesis protein CwsA from Mycobacterium tuberculosis (strain ATCC 25618 / H37Rv).